The primary structure comprises 553 residues: Zinc finger protein 324A (553 aa).

Positions 1-72 constitute a KRAB domain; the sequence is MAFEDVAVYF…SGTDTTLSRT (72 aa). A Nuclear localization signal motif is present at residues 130 to 135; sequence PSRERK. The disordered stretch occupies residues 186-221; the sequence is GRQPRTPERQKPCAQEVPGRTFGSAQDLEAAGGRGH. 9 C2H2-type zinc fingers span residues 257–279, 285–307, 313–335, 341–363, 369–391, 397–419, 425–447, 453–475, and 481–503; these read FECR…LRTH, YECA…QRIH, YACP…QRIH, FRCS…RKIH, YACA…ERTH, FVCA…QRVH, FACP…QLLH, FRCV…RRIH, and FVCT…QRIH. The tract at residues 502-553 is disordered; it reads IHTGEKTVRRSRASLHPQARSVAGASSEGAPAKETEPTPASGPAAVSQPAEV.

It belongs to the krueppel C2H2-type zinc-finger protein family. In terms of tissue distribution, expressed at high levels in the spleen, thymus, and PBMC, at low levels in the prostate, ovary, small intestine, colon (mucosal lining), placenta, lung, and pancreas, and very weakly expressed in the liver and kidney.

It localises to the nucleus. Functionally, may be involved in transcriptional regulation. May be involved in regulation of cell proliferation. The chain is Zinc finger protein 324A (ZNF324) from Homo sapiens (Human).